Reading from the N-terminus, the 497-residue chain is Catalase-2 (497 aa).

Active-site residues include His71 and Asn144. Residue Tyr354 coordinates heme.

Belongs to the catalase family. It depends on heme as a cofactor.

It catalyses the reaction 2 H2O2 = O2 + 2 H2O. Its function is as follows. Catalase involved in the oxidative stress response serving to protect cells from toxicity. For instance plays a role in defending against oxidative damage induced by excessive copper stress. Not required for maintaining normal lifespan. This chain is Catalase-2, found in Caenorhabditis elegans.